The sequence spans 1408 residues: DNA-directed RNA polymerase subunit beta' (1408 aa).

Positions 70, 72, 85, and 88 each coordinate Zn(2+). Positions 460, 462, and 464 each coordinate Mg(2+). Positions 814, 888, 895, and 898 each coordinate Zn(2+).

Belongs to the RNA polymerase beta' chain family. The RNAP catalytic core consists of 2 alpha, 1 beta, 1 beta' and 1 omega subunit. When a sigma factor is associated with the core the holoenzyme is formed, which can initiate transcription. It depends on Mg(2+) as a cofactor. Zn(2+) serves as cofactor.

The enzyme catalyses RNA(n) + a ribonucleoside 5'-triphosphate = RNA(n+1) + diphosphate. Its function is as follows. DNA-dependent RNA polymerase catalyzes the transcription of DNA into RNA using the four ribonucleoside triphosphates as substrates. The polypeptide is DNA-directed RNA polymerase subunit beta' (Serratia proteamaculans (strain 568)).